The chain runs to 388 residues: Succinate--CoA ligase [ADP-forming] subunit beta (388 aa).

Residues 9–244 enclose the ATP-grasp domain; the sequence is KQLFAEYGLP…PSQDDPREAH (236 aa). ATP contacts are provided by residues lysine 46, 53–55, glutamate 99, threonine 102, and glutamate 107; that span reads GRG. Mg(2+) contacts are provided by asparagine 199 and aspartate 213. Substrate-binding positions include asparagine 264 and 321–323; that span reads GIV.

Belongs to the succinate/malate CoA ligase beta subunit family. Heterotetramer of two alpha and two beta subunits. Mg(2+) is required as a cofactor.

The catalysed reaction is succinate + ATP + CoA = succinyl-CoA + ADP + phosphate. The enzyme catalyses GTP + succinate + CoA = succinyl-CoA + GDP + phosphate. It functions in the pathway carbohydrate metabolism; tricarboxylic acid cycle; succinate from succinyl-CoA (ligase route): step 1/1. Functionally, succinyl-CoA synthetase functions in the citric acid cycle (TCA), coupling the hydrolysis of succinyl-CoA to the synthesis of either ATP or GTP and thus represents the only step of substrate-level phosphorylation in the TCA. The beta subunit provides nucleotide specificity of the enzyme and binds the substrate succinate, while the binding sites for coenzyme A and phosphate are found in the alpha subunit. The chain is Succinate--CoA ligase [ADP-forming] subunit beta from Pseudomonas syringae pv. tomato (strain ATCC BAA-871 / DC3000).